We begin with the raw amino-acid sequence, 213 residues long: Pyrrolidone-carboxylate peptidase (213 aa).

Residues Glu78, Cys141, and His165 contribute to the active site.

It belongs to the peptidase C15 family. Homotetramer.

The protein resides in the cytoplasm. It catalyses the reaction Release of an N-terminal pyroglutamyl group from a polypeptide, the second amino acid generally not being Pro.. Removes 5-oxoproline from various penultimate amino acid residues except L-proline. In Clostridium perfringens (strain ATCC 13124 / DSM 756 / JCM 1290 / NCIMB 6125 / NCTC 8237 / Type A), this protein is Pyrrolidone-carboxylate peptidase.